A 263-amino-acid polypeptide reads, in one-letter code: Small ribosomal subunit protein uS15m (263 aa).

The transit peptide at 1-70 (MVLKSVFRST…VRQYARPSRK (70 aa)) directs the protein to the mitochondrion. Positions 238 to 251 (EREKQKAEEAERKK) are enriched in basic and acidic residues. Residues 238-263 (EREKQKAEEAERKKSSSSTNPQETAA) are disordered.

It belongs to the universal ribosomal protein uS15 family. Component of the mitochondrial ribosome small subunit (28S) which comprises a 12S rRNA and about 30 distinct proteins.

The protein resides in the mitochondrion. This chain is Small ribosomal subunit protein uS15m (mrps15), found in Danio rerio (Zebrafish).